The sequence spans 660 residues: DNA mismatch repair protein MutL (660 aa).

Positions 414–433 (SSVKHASRPQNTFTETDHPN) are disordered.

This sequence belongs to the DNA mismatch repair MutL/HexB family.

This protein is involved in the repair of mismatches in DNA. It is required for dam-dependent methyl-directed DNA mismatch repair. May act as a 'molecular matchmaker', a protein that promotes the formation of a stable complex between two or more DNA-binding proteins in an ATP-dependent manner without itself being part of a final effector complex. The sequence is that of DNA mismatch repair protein MutL from Streptococcus pyogenes serotype M6 (strain ATCC BAA-946 / MGAS10394).